The chain runs to 837 residues: Striatin-interacting protein 1 (837 aa).

Residue Met-1 is modified to N-acetylmethionine. Disordered regions lie at residues 1–66 (MEPA…SESP) and 333–423 (AASP…KGLP). Residues 18-35 (PQPPPPPPPATAQPPPGA) show a composition bias toward pro residues. Positions 47–60 (KAREFNRNQRKDSE) are enriched in basic and acidic residues. 3 positions are modified to phosphoserine: Ser-59, Ser-335, and Ser-339. A compositionally biased stretch (basic and acidic residues) spans 356-377 (KALIKQDNLDAFNERDPYKADD). The span at 378 to 391 (SREEEEENDDDNSL) shows a compositional bias: acidic residues. Ser-788 carries the post-translational modification Phosphoserine. Residues 796-837 (DNCLQSVLGQRVDLPEDFQMNYDLWLEREVFSKPISWEELLQ) are required for STRIPAK core complex formation.

This sequence belongs to the STRIP family. As to quaternary structure, part of the core of STRIPAK complexes composed of PP2A catalytic and scaffolding subunits, the striatins (PP2A regulatory subunits), the striatin-associated proteins MOB4, STRIP1 and STRIP2, PDCD10 and members of the STE20 kinases, such as STK24 and STK26. The STRIPAK complex can be extended by adapter proteins such as SLMAP:SIKE1, CTTNBP2 or CTTNBP2NL. Interacts with CDC42BPB. Interacts with CTTNBP2NL.

Its subcellular location is the cytoplasm. Its function is as follows. Plays a role in the regulation of cell morphology and cytoskeletal organization. Required in the cortical actin filament dynamics and cell shape. Part of the striatin-interacting phosphatase and kinase (STRIPAK) complexes. STRIPAK complexes have critical roles in protein (de)phosphorylation and are regulators of multiple signaling pathways including Hippo, MAPK, nuclear receptor and cytoskeleton remodeling. Different types of STRIPAK complexes are involved in a variety of biological processes such as cell growth, differentiation, apoptosis, metabolism and immune regulation. The polypeptide is Striatin-interacting protein 1 (STRIP1) (Macaca fascicularis (Crab-eating macaque)).